The primary structure comprises 929 residues: Valine--tRNA ligase (929 aa).

Positions 59-69 (PNVTGSLHMGH) match the 'HIGH' region motif. A 'KMSKS' region motif is present at residues 557–561 (KMSKS). ATP is bound at residue Lys560. The stretch at 862-929 (LVDLDALRGR…LARQRLSDLG (68 aa)) forms a coiled coil.

Belongs to the class-I aminoacyl-tRNA synthetase family. ValS type 1 subfamily. As to quaternary structure, monomer.

It is found in the cytoplasm. It catalyses the reaction tRNA(Val) + L-valine + ATP = L-valyl-tRNA(Val) + AMP + diphosphate. Its function is as follows. Catalyzes the attachment of valine to tRNA(Val). As ValRS can inadvertently accommodate and process structurally similar amino acids such as threonine, to avoid such errors, it has a 'posttransfer' editing activity that hydrolyzes mischarged Thr-tRNA(Val) in a tRNA-dependent manner. The protein is Valine--tRNA ligase of Prochlorococcus marinus (strain MIT 9313).